The following is an 88-amino-acid chain: MANSLRGEVLNLYKNLLYLGRDYPKGADYFKRRLKNVFLKNKDVKDPEKIKELIERGKFVMKELEALYFLRKYRAMKQRYYSDTNKTK.

It belongs to the complex I LYR family. As to quaternary structure, homotetramer. Interacts with NDUFAB1. Interacts with ETFA. Interacts with ETFB.

Its subcellular location is the mitochondrion. Functionally, acts as a regulator of the electron transfer flavoprotein by promoting the removal of flavin from the ETF holoenzyme (composed of ETFA and ETFB). This Bos taurus (Bovine) protein is Electron transfer flavoprotein regulatory factor 1.